Consider the following 372-residue polypeptide: N-methyl-L-tryptophan oxidase (372 aa).

4-34 (DLIIIGSGSVGAAAGYYATRAGLNVLMTDAH) is an FAD binding site. Cysteine 308 carries the post-translational modification S-8alpha-FAD cysteine.

The protein belongs to the MSOX/MTOX family. MTOX subfamily. In terms of assembly, monomer. Requires FAD as cofactor.

It carries out the reaction N(alpha)-methyl-L-tryptophan + O2 + H2O = L-tryptophan + formaldehyde + H2O2. Its function is as follows. Catalyzes the oxidative demethylation of N-methyl-L-tryptophan. The protein is N-methyl-L-tryptophan oxidase of Escherichia coli O157:H7.